The sequence spans 241 residues: Small ribosomal subunit protein uS2 (241 aa).

This sequence belongs to the universal ribosomal protein uS2 family.

The sequence is that of Small ribosomal subunit protein uS2 from Hamiltonella defensa subsp. Acyrthosiphon pisum (strain 5AT).